Consider the following 598-residue polypeptide: DNA ligase (598 aa).

Residue aspartate 258 participates in ATP binding. Lysine 260 (N6-AMP-lysine intermediate) is an active-site residue. ATP contacts are provided by arginine 265, arginine 280, glutamate 310, phenylalanine 350, arginine 427, and lysine 433.

Belongs to the ATP-dependent DNA ligase family. It depends on Mg(2+) as a cofactor.

It catalyses the reaction ATP + (deoxyribonucleotide)n-3'-hydroxyl + 5'-phospho-(deoxyribonucleotide)m = (deoxyribonucleotide)n+m + AMP + diphosphate.. In terms of biological role, DNA ligase that seals nicks in double-stranded DNA during DNA replication, DNA recombination and DNA repair. The sequence is that of DNA ligase from Sulfolobus acidocaldarius (strain ATCC 33909 / DSM 639 / JCM 8929 / NBRC 15157 / NCIMB 11770).